Here is a 306-residue protein sequence, read N- to C-terminus: Glutathione transport system permease protein GsiC (306 aa).

At Met-1–Arg-8 the chain is on the cytoplasmic side. A helical membrane pass occupies residues Leu-9–Leu-29. At Leu-30–Thr-102 the chain is on the periplasmic side. The 198-residue stretch at Phe-95–Val-292 folds into the ABC transmembrane type-1 domain. Residues Ile-103–Trp-123 form a helical membrane-spanning segment. The Cytoplasmic portion of the chain corresponds to Arg-124–Thr-134. Residues Leu-135 to Phe-155 traverse the membrane as a helical segment. Residues Ser-156–Asp-168 lie on the Periplasmic side of the membrane. The chain crosses the membrane as a helical span at residues Ser-169–Ala-189. Residues Arg-190–Met-228 are Cytoplasmic-facing. Residues Ile-229–Val-249 traverse the membrane as a helical segment. The Periplasmic segment spans residues Glu-250–Val-278. A helical membrane pass occupies residues Leu-279 to Ile-299. Residues Asn-300–Lys-306 are Cytoplasmic-facing.

The protein belongs to the binding-protein-dependent transport system permease family. In terms of assembly, the complex is composed of two ATP-binding proteins (GsiA), two transmembrane proteins (GsiC and GsiD) and a solute-binding protein (GsiB).

The protein localises to the cell inner membrane. Its function is as follows. Part of the ABC transporter complex GsiABCD involved in glutathione import. Probably responsible for the translocation of the substrate across the membrane. The polypeptide is Glutathione transport system permease protein GsiC (Salmonella typhimurium (strain LT2 / SGSC1412 / ATCC 700720)).